Consider the following 171-residue polypeptide: uncharacterized protein (171 aa).

This is an uncharacterized protein from Caenorhabditis elegans.